The primary structure comprises 551 residues: Ubiquitin domain-containing protein DSK2b (551 aa).

In terms of domain architecture, Ubiquitin-like spans 18–93; the sequence is VAVNIRCSNG…IHMVRGSAPS (76 aa). A disordered region spans residues 88–127; that stretch reads RGSAPSSAPPPAPAASQTTAPSVTRGVGSDNSSNLGGASP. STI1 domains follow at residues 143–184 and 197–236; these read GNAM…QNLM and NPQM…MREM. Residues 294–319 are compositionally biased toward polar residues; the sequence is QGVTTQGSDASNNSSTPNAGTGTIPN. A disordered region spans residues 294–336; it reads QGVTTQGSDASNNSSTPNAGTGTIPNANPLPNPWGATGGQTTA. STI1 domains follow at residues 373–410 and 414–449; these read SPLG…MNQL and NPQL…MQQM. The disordered stretch occupies residues 455–475; that stretch reads SLSQNRNTASQDAGQTGAATG. A compositionally biased stretch (low complexity) spans 465–475; sequence QDAGQTGAATG. The UBA domain occupies 504–548; the sequence is PPEERYATQLQQLQEMGFYDRAENIRALLATNGNVNAAVERLLGS.

Interacts with 'Lys-48'-linked polyubiquitin chains via its UBA domain. Interacts with RPN10 via its ubiquitin-like domain. Interacts with PEX2 and PEX12. As to expression, ubiquitous.

It is found in the nucleus. The protein resides in the cytoplasm. Functionally, binds and presumably selects ubiquitin-conjugates for destruction. Prefers multiubiquitin chains rather than single ubiquitins, with a binding affinity for 'Lys-48'-linked ubiquitin chains. Acts as a ubiquitin receptor that associates with the 26S proteasomal docking subunit RPN10 for the indirect recognition of ubiquitinated substrates of ubiquitin/26S proteasome-mediated proteolysis (UPP). This chain is Ubiquitin domain-containing protein DSK2b (DSK2B), found in Arabidopsis thaliana (Mouse-ear cress).